A 667-amino-acid polypeptide reads, in one-letter code: Probable export ATP-binding/permease protein MacB (667 aa).

The ABC transporter domain occupies 22 to 260; it reads LRLAGVSRRF…PVEEVQPAAE (239 aa). 58–65 lines the ATP pocket; it reads GASGSGKS. 4 helical membrane-spanning segments follow: residues 292–312, 540–560, 601–621, and 630–650; these read LLTM…SAIG, LTLL…IGVM, IGGV…ALFV, and LGSI…FGFV.

The protein belongs to the ABC transporter superfamily. Macrolide exporter (TC 3.A.1.122) family. Probably part of a tripartite efflux system, which is composed of an inner membrane transporter, a periplasmic membrane fusion protein, and an outer membrane component.

It localises to the cell inner membrane. In terms of biological role, probably part of a tripartite efflux system. This chain is Probable export ATP-binding/permease protein MacB, found in Pseudomonas entomophila (strain L48).